A 108-amino-acid polypeptide reads, in one-letter code: Protein SMALL AUXIN UP-REGULATED RNA 8 (108 aa).

This sequence belongs to the ARG7 family. Expressed in seedlings, leaves and flowers.

Its subcellular location is the cell membrane. Its function is as follows. Provide a mechanistic link between auxin and plasma membrane H(+)-ATPases (PM H(+)-ATPases, e.g. AHA1 and AHA2), and triggers PM H(+)-ATPases activity by promoting phosphorylation of their C-terminal autoinhibitory domain as a result of PP2C-D subfamily of type 2C phosphatases inhibition, thus leading to the acidification of the apoplast and the facilitation of solutes and water uptake to drive cell expansion. Triggers plant growth probably by promoting cell elongation. Regulates branch angles and bending. This chain is Protein SMALL AUXIN UP-REGULATED RNA 8, found in Arabidopsis thaliana (Mouse-ear cress).